The sequence spans 291 residues: ATP synthase gamma chain (291 aa).

Belongs to the ATPase gamma chain family. In terms of assembly, F-type ATPases have 2 components, CF(1) - the catalytic core - and CF(0) - the membrane proton channel. CF(1) has five subunits: alpha(3), beta(3), gamma(1), delta(1), epsilon(1). CF(0) has three main subunits: a, b and c.

It localises to the cell membrane. Produces ATP from ADP in the presence of a proton gradient across the membrane. The gamma chain is believed to be important in regulating ATPase activity and the flow of protons through the CF(0) complex. The chain is ATP synthase gamma chain from Streptococcus equi subsp. zooepidemicus (strain MGCS10565).